A 144-amino-acid chain; its full sequence is uncharacterized protein (144 aa).

The chain crosses the membrane as a helical span at residues 25–47 (LTLLDGCCVALVLALTAWSGFFV).

It localises to the membrane. This is an uncharacterized protein from Treponema pallidum (strain Nichols).